Here is an 871-residue protein sequence, read N- to C-terminus: Tegument protein UL47 homolog (871 aa).

A disordered region spans residues 1-212; that stretch reads MDQHHGARGG…DEDDMEVIRD (212 aa). The Nuclear localization signal motif lies at 13-33; it reads IRRPRRSIESRSHPFRATGNT. Composition is skewed to polar residues over residues 30–41 and 59–81; these read TGNTQRTYSTPR and EQAS…STSF. 3 stretches are compositionally biased toward acidic residues: residues 114–134, 146–155, and 185–207; these read SSSE…EEDQ, SSDENDEEED, and SESE…EDDM.

Belongs to the alphaherpesvirinae HHV-1 UL47 family. As to quaternary structure, interacts with US3 kinase. Interacts with UL31 and UL34; these interactions seem important for efficient virion nuclear egress. Interacts with UL41/VHS. Post-translationally, phosphorylated by US3. This phosphorylation is required for proper nuclear localization.

It is found in the virion tegument. The protein localises to the host nucleus. Its subcellular location is the host cytoplasm. Its function is as follows. Tegument protein that can bind to various RNA transcripts. Plays a role in the attenuation of selective viral and cellular mRNA degradation by modulating the activity of host shutoff RNase UL41/VHS. Also plays a role in the primary envelopment of virions in the perinuclear space, probably by interacting with two nuclear egress proteins UL31 and UL34. The sequence is that of Tegument protein UL47 homolog from Equus caballus (Horse).